The following is a 571-amino-acid chain: Proline--tRNA ligase (571 aa).

It belongs to the class-II aminoacyl-tRNA synthetase family. ProS type 1 subfamily. In terms of assembly, homodimer.

The protein localises to the cytoplasm. It carries out the reaction tRNA(Pro) + L-proline + ATP = L-prolyl-tRNA(Pro) + AMP + diphosphate. In terms of biological role, catalyzes the attachment of proline to tRNA(Pro) in a two-step reaction: proline is first activated by ATP to form Pro-AMP and then transferred to the acceptor end of tRNA(Pro). As ProRS can inadvertently accommodate and process non-cognate amino acids such as alanine and cysteine, to avoid such errors it has two additional distinct editing activities against alanine. One activity is designated as 'pretransfer' editing and involves the tRNA(Pro)-independent hydrolysis of activated Ala-AMP. The other activity is designated 'posttransfer' editing and involves deacylation of mischarged Ala-tRNA(Pro). The misacylated Cys-tRNA(Pro) is not edited by ProRS. In Thermodesulfovibrio yellowstonii (strain ATCC 51303 / DSM 11347 / YP87), this protein is Proline--tRNA ligase.